We begin with the raw amino-acid sequence, 142 residues long: MAPGRRVERVAALIRRETSELLIHGIRDERVHQGMVSITNVEVSGDLQHCKIFVSIYGEEIQRSEVLEGLEAASGFLRGELGRRLQMRRAPEVHFHLDRGIEKGTSVLNLLEQLEQQRETLGEVQSESDQPTTYETTTVNKT.

The segment at Thr120–Thr142 is disordered. The segment covering Glu123–Thr142 has biased composition (polar residues).

Belongs to the RbfA family. Monomer. Binds 30S ribosomal subunits, but not 50S ribosomal subunits or 70S ribosomes.

It localises to the cytoplasm. Its function is as follows. One of several proteins that assist in the late maturation steps of the functional core of the 30S ribosomal subunit. Associates with free 30S ribosomal subunits (but not with 30S subunits that are part of 70S ribosomes or polysomes). Required for efficient processing of 16S rRNA. May interact with the 5'-terminal helix region of 16S rRNA. This Prochlorococcus marinus (strain MIT 9313) protein is Ribosome-binding factor A.